The chain runs to 20 residues: Insulin-like growth factor-binding protein 2 (20 aa).

In terms of domain architecture, IGFBP N-terminal spans 2–20 (LVFYCPKCTAERQTACPKL).

Binds IGF2 more than IGF1. N-glycosylated.

It is found in the secreted. Functionally, inhibits IGF-mediated growth and developmental rates. IGF-binding proteins prolong the half-life of the IGFs and have been shown to either inhibit or stimulate the growth promoting effects of the IGFs on cell culture. They alter the interaction of IGFs with their cell surface receptors. The polypeptide is Insulin-like growth factor-binding protein 2 (igfbp2) (Oncorhynchus tshawytscha (Chinook salmon)).